The chain runs to 168 residues: Small ribosomal subunit protein uS8 (168 aa).

The tract at residues 59–93 (EEFKKMKELAEKSPNPKMRRYLQQLIDYNKGTQYP) is not found in other S8 sequences.

Belongs to the universal ribosomal protein uS8 family. In terms of assembly, part of the 30S ribosomal subunit. Contacts proteins S5 and S12.

Functionally, one of the primary rRNA binding proteins, it binds directly to 16S rRNA central domain where it helps coordinate assembly of the platform of the 30S subunit. The polypeptide is Small ribosomal subunit protein uS8 (Aquifex pyrophilus).